Here is a 321-residue protein sequence, read N- to C-terminus: 37 kDa cell surface protein (321 aa).

It is found in the secreted. The protein resides in the cell wall. In Candida albicans (Yeast), this protein is 37 kDa cell surface protein (CSP37).